Consider the following 1118-residue polypeptide: Ubiquitin carboxyl-terminal hydrolase 8 (1118 aa).

Residues 33-116 (TKSYVHSALK…ESLKLRYEEA (84 aa)) enclose the MIT domain. Composition is skewed to basic and acidic residues over residues 120–146 (KKLEEKDRQEEAQRLQQKRQETGREDG) and 158–177 (LDSKDKTQKSNGEKNEKCET). The tract at residues 120 to 177 (KKLEEKDRQEEAQRLQQKRQETGREDGGTLAKGSLENVLDSKDKTQKSNGEKNEKCET) is disordered. Residue Ser160 is modified to Phosphoserine. In terms of domain architecture, Rhodanese spans 195–313 (KNISLIIMDA…WLLCYPQYTT (119 aa)). Residues Ser392 and Ser400 each carry the phosphoserine modification. Residues 402–447 (KNVPQIDRTKKPAVKLPEEHRIKSESTNHEQQSPQSGKVIPDRSTK) form a disordered region. The SH3-binding motif lies at 405-413 (PQIDRTKKP). Residues 417 to 429 (LPEEHRIKSESTN) are compositionally biased toward basic and acidic residues. Ser452 carries the post-translational modification Phosphoserine. Over residues 475–573 (KNKQEKELRE…AKKSVEDRGK (99 aa)) the composition is skewed to basic and acidic residues. 2 disordered regions span residues 475-648 (KNKQ…GRIV) and 679-746 (YPPE…ENKP). Thr577 carries the post-translational modification Phosphothreonine. A compositionally biased stretch (basic and acidic residues) spans 618-645 (TFREDTDDTERNKAQREPLTRARSEEMG). Residues 716–726 (SYSSPDITQAI) show a composition bias toward polar residues. Ser718 and Ser719 each carry phosphoserine. Positions 777–1109 (TGLRNLGNTC…AAYILFYTSL (333 aa)) constitute a USP domain. Cys786 functions as the Nucleophile in the catalytic mechanism. Thr945 carries the phosphothreonine modification. His1067 functions as the Proton acceptor in the catalytic mechanism.

This sequence belongs to the peptidase C19 family. In terms of assembly, forms a ternary complex with RNF128 and OTUB1. Interacts (via C-terminal UCH catalytic domain) with OTUB1 isoform 1. Interacts with STAM2 (via SH3 domain). Interacts with DNAJB3, EGFR, EPS15, RASGRF1, RNF41, YWHAE, YWHAG and YWHAZ. Interacts with NBR1, RASGRF1, RNF41 and IST1. Associates with the ESCRT-0 complex and with microtubules. Interacts with BIRC6/bruce and KIF23/MKLP1. As to quaternary structure, (Microbial infection) Interacts with Zika virus non-structural protein 1. Phosphorylation of Ser-718 is essential for interaction with YWHAE and for cytosol localization. Undergoes dephosphorylation at Ser-718 in the M phase. Tyrosine-phosphorylated in its N-terminal half in an EGFR-dependent manner. In terms of processing, ubiquitinated. Inactive form is mostly monoubiquitinated, but polyubiquitination happens too. Ubiquitination is increased in EGF-stimulated cells. Ubiquitination of active form is undetectable, suggesting a possibility that USP8 deubiquitinates itself, thereby regulating its own function.

The protein localises to the cytoplasm. It is found in the nucleus. It localises to the endosome membrane. The protein resides in the cell membrane. The enzyme catalyses Thiol-dependent hydrolysis of ester, thioester, amide, peptide and isopeptide bonds formed by the C-terminal Gly of ubiquitin (a 76-residue protein attached to proteins as an intracellular targeting signal).. In terms of biological role, hydrolase that can remove conjugated ubiquitin from proteins and therefore plays an important regulatory role at the level of protein turnover by preventing degradation. Converts both 'Lys-48' an 'Lys-63'-linked ubiquitin chains. Catalytic activity is enhanced in the M phase. Involved in cell proliferation. Required to enter into S phase in response to serum stimulation. May regulate T-cell anergy mediated by RNF128 via the formation of a complex containing RNF128 and OTUB1. Probably regulates the stability of STAM2 and RASGRF1. Regulates endosomal ubiquitin dynamics, cargo sorting, membrane traffic at early endosomes, and maintenance of ESCRT-0 stability. The level of protein ubiquitination on endosomes is essential for maintaining the morphology of the organelle. Deubiquitinates EPS15 and controls tyrosine kinase stability. Removes conjugated ubiquitin from EGFR thus regulating EGFR degradation and downstream MAPK signaling. Involved in acrosome biogenesis through interaction with the spermatid ESCRT-0 complex and microtubules. Deubiquitinates BIRC6/bruce and KIF23/MKLP1. Deubiquitinates BACE1 which inhibits BACE1 lysosomal degradation and modulates BACE-mediated APP cleavage and amyloid-beta formation. The chain is Ubiquitin carboxyl-terminal hydrolase 8 from Homo sapiens (Human).